An 85-amino-acid chain; its full sequence is Large ribosomal subunit protein uL29 (85 aa).

This sequence belongs to the universal ribosomal protein uL29 family.

The sequence is that of Large ribosomal subunit protein uL29 from Thermobifida fusca (strain YX).